A 436-amino-acid chain; its full sequence is GTPase Der (436 aa).

2 consecutive EngA-type G domains span residues 4-167 (PVVA…PKEE) and 176-351 (VKFS…DNHS). GTP-binding positions include 10–17 (GRPNVGKS), 57–61 (DTGGI), 119–122 (NKVD), 182–189 (GRPNVGKS), 229–233 (DTAGM), and 294–297 (NKWD). Residues 352-436 (LRVQSSMLND…PIRVIARKRK (85 aa)) form the KH-like domain.

This sequence belongs to the TRAFAC class TrmE-Era-EngA-EngB-Septin-like GTPase superfamily. EngA (Der) GTPase family. Associates with the 50S ribosomal subunit.

Its function is as follows. GTPase that plays an essential role in the late steps of ribosome biogenesis. In Listeria innocua serovar 6a (strain ATCC BAA-680 / CLIP 11262), this protein is GTPase Der.